A 272-amino-acid polypeptide reads, in one-letter code: MEACCLLQLPQRLLLLGAAALTATALETADLAELCGQTWQGDGLLLRSHAASRRFYFVAPDTDCGLWVQAAAPGDRIRFQFRFFLVYSLTPAPPALNTSSPAPADPCAPGSYLQFYEGPPGAPRPLGSPLCGLNIPVPVASSGPFLGLRLVTRGRQPRVDFVGEVTSFRLGPCGAYFRCQNGRCIPSSLVCDPWGMDNCGDGSDQGSWSPADCRGPSPVPSQTGSTDAHTSRSLTPSPALGSAGSLWIAAERSSPAGRDPTRQDAALEGSTE.

An N-terminal signal peptide occupies residues 1–25 (MEACCLLQLPQRLLLLGAAALTATA). At 26 to 233 (LETADLAELC…GSTDAHTSRS (208 aa)) the chain is on the extracellular side. N-linked (GlcNAc...) asparagine glycosylation occurs at Asn-97. The LDL-receptor class A domain occupies 172 to 214 (PCGAYFRCQNGRCIPSSLVCDPWGMDNCGDGSDQGSWSPADCR). Disulfide bonds link Cys-173-Cys-184, Cys-179-Cys-199, and Cys-191-Cys-213. Positions 202–272 (GSDQGSWSPA…QDAALEGSTE (71 aa)) are disordered. Over residues 220–236 (PSQTGSTDAHTSRSLTP) the composition is skewed to polar residues. The chain crosses the membrane as a helical span at residues 234–250 (LTPSPALGSAGSLWIAA). At 251 to 272 (ERSSPAGRDPTRQDAALEGSTE) the chain is on the cytoplasmic side.

It belongs to the LDLR family.

It localises to the membrane. In Homo sapiens (Human), this protein is Low-density lipoprotein receptor class A domain-containing protein 2 (LDLRAD2).